We begin with the raw amino-acid sequence, 70 residues long: ATP synthase subunit c (70 aa).

Transmembrane regions (helical) follow at residues 4-24 (IATA…NGLI) and 47-67 (FIGI…GFLL).

The protein belongs to the ATPase C chain family. As to quaternary structure, F-type ATPases have 2 components, F(1) - the catalytic core - and F(0) - the membrane proton channel. F(1) has five subunits: alpha(3), beta(3), gamma(1), delta(1), epsilon(1). F(0) has three main subunits: a(1), b(2) and c(10-14). The alpha and beta chains form an alternating ring which encloses part of the gamma chain. F(1) is attached to F(0) by a central stalk formed by the gamma and epsilon chains, while a peripheral stalk is formed by the delta and b chains.

The protein resides in the cell membrane. F(1)F(0) ATP synthase produces ATP from ADP in the presence of a proton or sodium gradient. F-type ATPases consist of two structural domains, F(1) containing the extramembraneous catalytic core and F(0) containing the membrane proton channel, linked together by a central stalk and a peripheral stalk. During catalysis, ATP synthesis in the catalytic domain of F(1) is coupled via a rotary mechanism of the central stalk subunits to proton translocation. Its function is as follows. Key component of the F(0) channel; it plays a direct role in translocation across the membrane. A homomeric c-ring of between 10-14 subunits forms the central stalk rotor element with the F(1) delta and epsilon subunits. The chain is ATP synthase subunit c from Exiguobacterium sibiricum (strain DSM 17290 / CCUG 55495 / CIP 109462 / JCM 13490 / 255-15).